A 158-amino-acid polypeptide reads, in one-letter code: 6,7-dimethyl-8-ribityllumazine synthase (158 aa).

5-amino-6-(D-ribitylamino)uracil contacts are provided by residues F24, A58–E60, and A82–I84. (2S)-2-hydroxy-3-oxobutyl phosphate is bound at residue G87 to T88. H90 (proton donor) is an active-site residue. F115 provides a ligand contact to 5-amino-6-(D-ribitylamino)uracil. Residue R129 participates in (2S)-2-hydroxy-3-oxobutyl phosphate binding.

Belongs to the DMRL synthase family. As to quaternary structure, forms an icosahedral capsid composed of 60 subunits, arranged as a dodecamer of pentamers.

The catalysed reaction is (2S)-2-hydroxy-3-oxobutyl phosphate + 5-amino-6-(D-ribitylamino)uracil = 6,7-dimethyl-8-(1-D-ribityl)lumazine + phosphate + 2 H2O + H(+). The protein operates within cofactor biosynthesis; riboflavin biosynthesis; riboflavin from 2-hydroxy-3-oxobutyl phosphate and 5-amino-6-(D-ribitylamino)uracil: step 1/2. Its function is as follows. Catalyzes the formation of 6,7-dimethyl-8-ribityllumazine by condensation of 5-amino-6-(D-ribitylamino)uracil with 3,4-dihydroxy-2-butanone 4-phosphate. This is the penultimate step in the biosynthesis of riboflavin. In Azotobacter vinelandii (strain DJ / ATCC BAA-1303), this protein is 6,7-dimethyl-8-ribityllumazine synthase.